Here is a 1934-residue protein sequence, read N- to C-terminus: Pyruvate dehydrogenase [NADP(+)] (1934 aa).

2 4Fe-4S ferredoxin-type domains span residues 710 to 739 and 767 to 796; these read SIPI…PFLL and YRIQ…MEGL. Residues Cys719, Cys722, Cys725, Cys729, Cys776, Cys779, Cys782, and Cys786 each contribute to the [4Fe-4S] cluster site. The Flavodoxin-like domain maps to 1288-1438; it reads MHVLYGTETG…ELIEWLPDYL (151 aa). The FAD-binding FR-type domain occupies 1501 to 1759; sequence PNSVLLPVIE…NIKASAFNLP (259 aa). Residues 1542-1553 and 1685-1695 each bind FAD; these read YCLGDSLALYGQ and IKSRSYSIASC.

It in the N-terminal section; belongs to the pyruvate:ferredoxin/flavodoxin oxidoreductase family. As to quaternary structure, homodimer. It depends on FAD as a cofactor. Requires FMN as cofactor. Thiamine diphosphate serves as cofactor.

The enzyme catalyses pyruvate + NADP(+) + CoA = acetyl-CoA + CO2 + NADPH. May have an important role in respiratory metabolism. Cryptosporidium have a relic mitochondrion with no function in energy metabolism so it is not known if PFOR has a function. This Cryptosporidium parvum protein is Pyruvate dehydrogenase [NADP(+)] (PFOR).